Consider the following 245-residue polypeptide: DNA polymerase sliding clamp 2 (245 aa).

Belongs to the PCNA family. As to quaternary structure, forms homodimers with PCNA1, which then recruit PCNA3; does not form homotrimers. The heterodimers interact with RfcS homotetramers. Heterotrimer which circularizes head-to-tail (head is at N-terminus, tail is at C-terminus) to form a toroid; DNA passes through its center. Replication factor C (RFC) is required to load the toroid on the DNA. This subunit interacts with DNA polymerase I (dpo1). The heterotrimer also interacts with flap endonuclease 1, DNA ligase and XPF via the other subunits.

One of the sliding clamp subunits that acts as a moving platform for DNA processing. Responsible for tethering the catalytic subunit of DNA polymerase to DNA during high-speed replication. Heterotrimer stimulates the Holliday junction resolvase Hjc. DNA polymerase I, DNA ligase and the flap endonuclease may be constitutively associated with the PCNA heterotrimer forming a scanning complex able to couple DNA synthesis and Okazaki fragment maturation. This is DNA polymerase sliding clamp 2 from Saccharolobus solfataricus (strain ATCC 35092 / DSM 1617 / JCM 11322 / P2) (Sulfolobus solfataricus).